Here is a 659-residue protein sequence, read N- to C-terminus: Threonine--tRNA ligase (659 aa).

Positions 7 to 70 (DSELIKLTLP…QQDGAIEIVT (64 aa)) constitute a TGS domain. The interval 253–555 (DHRKLGSELE…LIENFAGNFP (303 aa)) is catalytic. Residues Cys351, His402, and His532 each coordinate Zn(2+).

This sequence belongs to the class-II aminoacyl-tRNA synthetase family. In terms of assembly, homodimer. It depends on Zn(2+) as a cofactor.

It is found in the cytoplasm. It catalyses the reaction tRNA(Thr) + L-threonine + ATP = L-threonyl-tRNA(Thr) + AMP + diphosphate + H(+). Catalyzes the attachment of threonine to tRNA(Thr) in a two-step reaction: L-threonine is first activated by ATP to form Thr-AMP and then transferred to the acceptor end of tRNA(Thr). Also edits incorrectly charged L-seryl-tRNA(Thr). This chain is Threonine--tRNA ligase, found in Chloroherpeton thalassium (strain ATCC 35110 / GB-78).